The following is a 38-amino-acid chain: Photosystem II reaction center protein X (38 aa).

A helical transmembrane segment spans residues 9 to 29 (ISSLTAGGLVVLTIAVALIVI).

It belongs to the PsbX family. Type 1 subfamily. In terms of assembly, PSII is composed of 1 copy each of membrane proteins PsbA, PsbB, PsbC, PsbD, PsbE, PsbF, PsbH, PsbI, PsbJ, PsbK, PsbL, PsbM, PsbT, PsbX, PsbY, PsbZ, Psb30/Ycf12, at least 3 peripheral proteins of the oxygen-evolving complex and a large number of cofactors. It forms dimeric complexes.

The protein resides in the plastid. The protein localises to the chloroplast thylakoid membrane. In terms of biological role, involved in the binding and/or turnover of quinones at the Q(B) site of photosystem II (PSII). PSII is a light-driven water plastoquinone oxidoreductase, using light energy to abstract electrons from H(2)O, generating a proton gradient subsequently used for ATP formation. The protein is Photosystem II reaction center protein X of Trieres chinensis (Marine centric diatom).